We begin with the raw amino-acid sequence, 414 residues long: tRNA (guanine-N(7)-)-methyltransferase non-catalytic subunit WDR4 (414 aa).

Position 2 is an N-acetylalanine (A2). WD repeat units lie at residues 60–99, 101–140, 144–184, and 187–227; these read QGSD…CLSV, TVVR…GGGR, GHLS…IESF, and GHTE…ELHC. Residues 377-414 are disordered; that stretch reads EERLQQQLEKKRRQAPPPGPNGPTKKMRAGELAQGCSS.

It belongs to the WD repeat TRM82 family. Non-catalytic component of the METTL1-WDR4 complex, composed of METTL1 and WDR4. Interacts with FEN1; the interaction is direct.

The protein resides in the nucleus. It localises to the chromosome. The protein operates within tRNA modification; N(7)-methylguanine-tRNA biosynthesis. Its function is as follows. Non-catalytic component of the METTL1-WDR4 methyltransferase complex required for the formation of N(7)-methylguanine in a subset of RNA species, such as tRNAs, mRNAs and microRNAs (miRNAs). In the METTL1-WDR4 methyltransferase complex, WDR4 acts as a scaffold for tRNA-binding. Required for the formation of N(7)-methylguanine at position 46 (m7G46) in a large subset of tRNAs that contain the 5'-RAGGU-3' motif within the variable loop. M7G46 interacts with C13-G22 in the D-loop to stabilize tRNA tertiary structure and protect tRNAs from decay. Also required for the formation of N(7)-methylguanine at internal sites in a subset of mRNAs. Also required for methylation of a specific subset of miRNAs, such as let-7. Independently of METTL1, also plays a role in genome stability: localizes at the DNA replication site and regulates endonucleolytic activities of FEN1. The protein is tRNA (guanine-N(7)-)-methyltransferase non-catalytic subunit WDR4 of Bos taurus (Bovine).